Consider the following 551-residue polypeptide: Palmdelphin (551 aa).

Met1 carries the post-translational modification N-acetylmethionine. Residues 12–106 adopt a coiled-coil conformation; that stretch reads QAITDKRKIQ…LQISANEEVI (95 aa). Residue Lys125 forms a Glycyl lysine isopeptide (Lys-Gly) (interchain with G-Cter in SUMO2) linkage. 2 positions are modified to phosphoserine: Ser135 and Ser163. A Glycyl lysine isopeptide (Lys-Gly) (interchain with G-Cter in SUMO1); alternate cross-link involves residue Lys178. A Glycyl lysine isopeptide (Lys-Gly) (interchain with G-Cter in SUMO2); alternate cross-link involves residue Lys178. The span at 247–258 shows a compositional bias: basic and acidic residues; that stretch reads ERNSKSPTEYHE. The disordered stretch occupies residues 247–267; the sequence is ERNSKSPTEYHEPVYANPFCR. At Thr270 the chain carries Phosphothreonine. 2 disordered regions span residues 298-387 and 452-536; these read HESE…CSSP and EDDE…DPSL. Residues Ser322, Ser350, Ser371, Ser376, Ser385, and Ser386 each carry the phosphoserine modification. Residues 484-495 show a composition bias toward basic and acidic residues; sequence KRSEVSPHENTN. A phosphoserine mark is found at Ser498, Ser515, and Ser520.

Belongs to the paralemmin family. Interacts with GLUL. Phosphorylated. As to expression, expressed in the brain and the spinal cord. Expressed in the anterior olfactory nucleus, the olfactory tubercle, the nucleus supraopticus, the nucleus of the lateral olfactory tract, the piriform cortex, the cortico-amygdaloid transition zone, the septofimbrial nucleus and the indusium griseum (at protein level).

It is found in the cytoplasm. The protein localises to the cell projection. The protein resides in the dendrite. Its subcellular location is the dendritic spine. The protein is Palmdelphin (Palmd) of Rattus norvegicus (Rat).